The sequence spans 351 residues: Outer membrane protein A (351 aa).

An N-terminal signal peptide occupies residues 1–21; that stretch reads MKKTAIAIAVALAGFATVAQA. 8 consecutive transmembrane segments (beta stranded) span residues 27 to 37, 55 to 66, 70 to 78, 96 to 107, 112 to 120, 147 to 156, 161 to 168, and 187 to 195; these read TWYTGAKLGWS, QLGAGAFGGYQV, VGFEMGYDW, QGVQLTAKLGYP, LDIYTRLGG, PVFAGGVEWA, IATRLEYQ, and LLSLGVSYR. 4 tandem repeats follow at residues 206–207, 208–209, 210–211, and 212–213. Positions 206-213 are 4 X 2 AA tandem repeats of A-P; sequence APAPAPAP. The OmpA-like domain occupies 215–343; the sequence is VQTKHFTLKS…RVEIEVKGIK (129 aa). Residues Cys316 and Cys328 are joined by a disulfide bond.

It belongs to the outer membrane OOP (TC 1.B.6) superfamily. OmpA family. Monomer and homodimer.

Its subcellular location is the cell outer membrane. Functionally, with TolR probably plays a role in maintaining the position of the peptidoglycan cell wall in the periplasm. Acts as a porin with low permeability that allows slow penetration of small solutes; an internal gate slows down solute passage. In terms of biological role, required for conjugation with F-type plasmids; probably serves as the mating receptor on recipient cells. The chain is Outer membrane protein A from Escherichia fergusonii (strain ATCC 35469 / DSM 13698 / CCUG 18766 / IAM 14443 / JCM 21226 / LMG 7866 / NBRC 102419 / NCTC 12128 / CDC 0568-73).